The following is a 463-amino-acid chain: tRNA dimethylallyltransferase 9 (463 aa).

57–64 (GPTGAGKS) serves as a coordination point for ATP. Residue 59–64 (TGAGKS) coordinates substrate. An interaction with substrate tRNA region spans residues 82 to 85 (DSVQ).

The protein belongs to the IPP transferase family. Mg(2+) is required as a cofactor. Expressed ubiquitously, with highest expression in proliferating tissues.

The protein localises to the cytoplasm. It carries out the reaction adenosine(37) in tRNA + dimethylallyl diphosphate = N(6)-dimethylallyladenosine(37) in tRNA + diphosphate. In terms of biological role, catalyzes the transfer of a dimethylallyl group onto the adenine at position 37 in tRNAs that read codons beginning with uridine, leading to the formation of N6-(dimethylallyl)adenosine (i(6)A). Involved in the cis-type cytokinin biosynthesis. This chain is tRNA dimethylallyltransferase 9 (IPT9), found in Arabidopsis thaliana (Mouse-ear cress).